The sequence spans 306 residues: Large ribosomal subunit protein uL2m (306 aa).

Residues 1-60 constitute a mitochondrion transit peptide; that stretch reads MALCALTSALRSLSLASAAITARVPTLLPAAQIQSNVLLQLPPALVSPSYRPVHMSADRS.

The protein belongs to the universal ribosomal protein uL2 family. In terms of assembly, component of the mitochondrial ribosome large subunit (39S) which comprises a 16S rRNA and about 50 distinct proteins.

It localises to the mitochondrion. This Mus musculus (Mouse) protein is Large ribosomal subunit protein uL2m (Mrpl2).